We begin with the raw amino-acid sequence, 267 residues long: 5'-nucleotidase SurE (267 aa).

A divalent metal cation is bound by residues Asp-14, Asp-15, Ser-45, and Asn-100.

This sequence belongs to the SurE nucleotidase family. Requires a divalent metal cation as cofactor.

The protein resides in the cytoplasm. The catalysed reaction is a ribonucleoside 5'-phosphate + H2O = a ribonucleoside + phosphate. Functionally, nucleotidase that shows phosphatase activity on nucleoside 5'-monophosphates. The sequence is that of 5'-nucleotidase SurE from Methanosarcina barkeri (strain Fusaro / DSM 804).